A 592-amino-acid polypeptide reads, in one-letter code: Aspartate--tRNA(Asp/Asn) ligase (592 aa).

E175 contacts L-aspartate. An aspartate region spans residues 199–202; sequence QQFK. 2 residues coordinate L-aspartate: R221 and H451. 221-223 lines the ATP pocket; that stretch reads RDE. E485 is an ATP binding site. R492 lines the L-aspartate pocket. 537–540 lines the ATP pocket; that stretch reads GIDR.

Belongs to the class-II aminoacyl-tRNA synthetase family. Type 1 subfamily. As to quaternary structure, homodimer.

The protein resides in the cytoplasm. It carries out the reaction tRNA(Asx) + L-aspartate + ATP = L-aspartyl-tRNA(Asx) + AMP + diphosphate. Aspartyl-tRNA synthetase with relaxed tRNA specificity since it is able to aspartylate not only its cognate tRNA(Asp) but also tRNA(Asn). Reaction proceeds in two steps: L-aspartate is first activated by ATP to form Asp-AMP and then transferred to the acceptor end of tRNA(Asp/Asn). This is Aspartate--tRNA(Asp/Asn) ligase from Phenylobacterium zucineum (strain HLK1).